The following is a 388-amino-acid chain: uncharacterized protein (388 aa).

Positions 68 to 96 (KVDRMSEEEERMAIATRKAKEVAKELSET) form a coiled coil. The interval 162 to 388 (GSHPLVREFN…PPQQDWFDSV (227 aa)) is disordered. 2 stretches are compositionally biased toward basic and acidic residues: residues 166-176 (LVREFNGEKPP) and 196-208 (ATDK…QSDK). The segment covering 233 to 251 (GVKHQHAIRRDDRHRHGMR) has biased composition (basic residues). 2 stretches are compositionally biased toward low complexity: residues 265-279 (QQQQ…SRGQ) and 293-346 (QRRP…QRPA).

This is an uncharacterized protein from Frog virus 3 (isolate Goorha) (FV-3).